The sequence spans 507 residues: MAEFQGYLELDRSWQHDLLYPLIFREYIYTFVHDHGLNRNRSNLLENVGYDNKSSLLIVKRLISRMYQQNHLIISANDSNQNPVFGYNKNFYSQMISEGFAVVVEIPFSLRLVSSLKGTEVVKYYNLQSIHSTFPFFEDKFPHLNYVSDVLIPYPIHLEILVQTLRYWVKDVSSLHLLRLFLHEYYSWNRFLIPNKSISIFSKSNLRFFLFLYNSHVCEYESILLFLRNQSSHLRLTSSGGFFERIYFYGKIKHPVEEVFADDFPTSLWFFQDLVIHYVRYQGKSILASKDMPLLMNKWKYYLVHLWQCHFYVWSQAGSIYINQLSKHAFGFLGYLSSMRINLSVVRSQMLENSFLMDNAMKKIDTLIPISPLIGSLAKMKFCNVVGQPLSKSTWADLSDFDIIDRFARICRNLFHYYSGSSKKKSLYRVKYILRLSCVKTLARKHKSTVRTFLKRLGSELLDEFFTEEEEVLSLIFPRTYSTLRRLYKGRIWYLDIFCINDLVNHE.

The protein belongs to the intron maturase 2 family. MatK subfamily.

Its subcellular location is the plastid. It is found in the chloroplast. Functionally, usually encoded in the trnK tRNA gene intron. Probably assists in splicing its own and other chloroplast group II introns. The polypeptide is Maturase K (Humulus lupulus (European hop)).